Reading from the N-terminus, the 231-residue chain is Tol-Pal system protein TolQ (231 aa).

3 helical membrane-spanning segments follow: residues 20–40 (IVVQLVMLTLVAASVTSWIMI), 134–154 (FLATVGSTSPYVGLFGTVWGI), and 176–196 (IAEALIATAIGLFAAIPAVIA).

The protein belongs to the ExbB/TolQ family. As to quaternary structure, the Tol-Pal system is composed of five core proteins: the inner membrane proteins TolA, TolQ and TolR, the periplasmic protein TolB and the outer membrane protein Pal. They form a network linking the inner and outer membranes and the peptidoglycan layer.

The protein resides in the cell inner membrane. Functionally, part of the Tol-Pal system, which plays a role in outer membrane invagination during cell division and is important for maintaining outer membrane integrity. The polypeptide is Tol-Pal system protein TolQ (Pseudomonas aeruginosa (strain ATCC 15692 / DSM 22644 / CIP 104116 / JCM 14847 / LMG 12228 / 1C / PRS 101 / PAO1)).